The sequence spans 62 residues: Large ribosomal subunit protein bL28 (62 aa).

The protein belongs to the bacterial ribosomal protein bL28 family.

This Streptococcus gordonii (strain Challis / ATCC 35105 / BCRC 15272 / CH1 / DL1 / V288) protein is Large ribosomal subunit protein bL28.